The sequence spans 82 residues: Small ribosomal subunit protein bS16 (82 aa).

The protein belongs to the bacterial ribosomal protein bS16 family.

This Vibrio parahaemolyticus serotype O3:K6 (strain RIMD 2210633) protein is Small ribosomal subunit protein bS16.